Reading from the N-terminus, the 537-residue chain is Putative cysteine ligase BshC (537 aa).

It belongs to the BshC family.

Functionally, involved in bacillithiol (BSH) biosynthesis. May catalyze the last step of the pathway, the addition of cysteine to glucosamine malate (GlcN-Mal) to generate BSH. In Staphylococcus saprophyticus subsp. saprophyticus (strain ATCC 15305 / DSM 20229 / NCIMB 8711 / NCTC 7292 / S-41), this protein is Putative cysteine ligase BshC.